The primary structure comprises 174 residues: Large ribosomal subunit protein uL10 (174 aa).

This sequence belongs to the universal ribosomal protein uL10 family. As to quaternary structure, part of the ribosomal stalk of the 50S ribosomal subunit. The N-terminus interacts with L11 and the large rRNA to form the base of the stalk. The C-terminus forms an elongated spine to which L12 dimers bind in a sequential fashion forming a multimeric L10(L12)X complex.

In terms of biological role, forms part of the ribosomal stalk, playing a central role in the interaction of the ribosome with GTP-bound translation factors. The sequence is that of Large ribosomal subunit protein uL10 from Anaeromyxobacter sp. (strain K).